Reading from the N-terminus, the 205-residue chain is ATP phosphoribosyltransferase (205 aa).

The protein belongs to the ATP phosphoribosyltransferase family. Short subfamily. As to quaternary structure, heteromultimer composed of HisG and HisZ subunits.

The protein localises to the cytoplasm. The catalysed reaction is 1-(5-phospho-beta-D-ribosyl)-ATP + diphosphate = 5-phospho-alpha-D-ribose 1-diphosphate + ATP. It functions in the pathway amino-acid biosynthesis; L-histidine biosynthesis; L-histidine from 5-phospho-alpha-D-ribose 1-diphosphate: step 1/9. In terms of biological role, catalyzes the condensation of ATP and 5-phosphoribose 1-diphosphate to form N'-(5'-phosphoribosyl)-ATP (PR-ATP). Has a crucial role in the pathway because the rate of histidine biosynthesis seems to be controlled primarily by regulation of HisG enzymatic activity. This chain is ATP phosphoribosyltransferase, found in Leptospira interrogans serogroup Icterohaemorrhagiae serovar Lai (strain 56601).